Reading from the N-terminus, the 267-residue chain is tRNA pseudouridine synthase A (267 aa).

The active-site Nucleophile is aspartate 54. Substrate is bound at residue tyrosine 114.

It belongs to the tRNA pseudouridine synthase TruA family. Homodimer.

The enzyme catalyses uridine(38/39/40) in tRNA = pseudouridine(38/39/40) in tRNA. Functionally, formation of pseudouridine at positions 38, 39 and 40 in the anticodon stem and loop of transfer RNAs. This Tropheryma whipplei (strain TW08/27) (Whipple's bacillus) protein is tRNA pseudouridine synthase A.